The primary structure comprises 456 residues: Probable mannan endo-1,4-beta-mannosidase F (456 aa).

A signal peptide spans 1–18; sequence MRPLSSAALLSAIGAVAA. Positions 19–54 constitute a CBM1 domain; that stretch reads QVGPWGQCGGQSYTGGTSCVSGWACVFLNDWYSQCQ. Residues 79 to 110 are disordered; that stretch reads STSVSATAPPSSTSSSTASVSSSTSSTPIPTS. The segment at 79–113 is ser-rich linker; the sequence is STSVSATAPPSSTSSSTASVSSSTSSTPIPTSSGS. Residues 114 to 456 are catalytic; it reads FVKAEGLKFN…CAVIDHVSRI (343 aa). The substrate site is built by Trp-166 and Asn-280. The active-site Proton donor is Glu-281. Tyr-356 is a substrate binding site. Catalysis depends on Glu-390, which acts as the Nucleophile. Position 420 (Trp-420) interacts with substrate.

The protein belongs to the glycosyl hydrolase 5 (cellulase A) family.

The protein localises to the secreted. It catalyses the reaction Random hydrolysis of (1-&gt;4)-beta-D-mannosidic linkages in mannans, galactomannans and glucomannans.. Endo-1,4-mannanase, a crucial enzyme for depolymerization of seed galactomannans and wood galactoglucomannans. The polypeptide is Probable mannan endo-1,4-beta-mannosidase F (manF) (Neosartorya fischeri (strain ATCC 1020 / DSM 3700 / CBS 544.65 / FGSC A1164 / JCM 1740 / NRRL 181 / WB 181) (Aspergillus fischerianus)).